A 1067-amino-acid chain; its full sequence is Mediator of RNA polymerase II transcription subunit 5 (1067 aa).

Belongs to the Mediator complex subunit 5 family. As to quaternary structure, component of the Mediator complex.

Its subcellular location is the nucleus. Component of the Mediator complex, a coactivator involved in the regulated transcription of nearly all RNA polymerase II-dependent genes. Mediator functions as a bridge to convey information from gene-specific regulatory proteins to the basal RNA polymerase II transcription machinery. Mediator is recruited to promoters by direct interactions with regulatory proteins and serves as a scaffold for the assembly of a functional preinitiation complex with RNA polymerase II and the general transcription factors. This is Mediator of RNA polymerase II transcription subunit 5 (NUT1) from Kluyveromyces lactis (strain ATCC 8585 / CBS 2359 / DSM 70799 / NBRC 1267 / NRRL Y-1140 / WM37) (Yeast).